The sequence spans 107 residues: Large ribosomal subunit protein P1 (107 aa).

The tract at residues 67–107 (GAAPAAAAPAAGGAPAAGAAPKKEEKKEPSEEEDMGFSLFD) is disordered. Low complexity predominate over residues 69–86 (APAAAAPAAGGAPAAGAA).

The protein belongs to the eukaryotic ribosomal protein P1/P2 family. In terms of assembly, P1 and P2 exist as dimers at the large ribosomal subunit.

Its function is as follows. Plays an important role in the elongation step of protein synthesis. This chain is Large ribosomal subunit protein P1, found in Chlamydomonas reinhardtii (Chlamydomonas smithii).